The chain runs to 522 residues: MWPQPRLPPHPAMSEKTQQGKLAAAKKKLKAYWQRKSPGIPAGANRKKKVNGSSPDTATSGGYHSPGDSATGIYGEGRASSTTLQDLESQYQELAVALDSSSAIISQLTENINSLVRTSKEEKKHEIHLVQKLGRSLFKLKNQTAEPLAPEPPAGPSKVEQLQDETNHLRKELESVGRQLQAEVENNQMLSLLNRRQEERLREQEERLHEQEERLHEQEERLCEQEERLREQEERLCEQEERLREQEERLCEQEERLREQEERLCEQEERLREQEERLREQEERLCEQEERLCEQEERLREQEERLCEQEERLCEQEERLCEQEKLPGQERLLEEVEKLLEQERRQEEQERLLERERLLDEVEELLEQERLRQQDERLWQQETLRELERLRELERLRELERMLELGWEALYEQRAEPRSGFEELNNENKSTLQLEQQVKELEKSGGAEEPRGSESAAAARPVPGAPVPQGAWMCGQAGWTPQEHPGLSGEAVGTGEAAGGAEEAACHSFRAAENRELNITII.

The segment covering 1 to 11 (MWPQPRLPPHP) has biased composition (pro residues). A disordered region spans residues 1 to 77 (MWPQPRLPPH…DSATGIYGEG (77 aa)). The span at 51–62 (NGSSPDTATSGG) shows a compositional bias: polar residues. Positions 157 to 328 (SKVEQLQDET…RLCEQEKLPG (172 aa)) form a coiled coil. The segment covering 439 to 452 (KELEKSGGAEEPRG) has biased composition (basic and acidic residues). Residues 439 to 503 (KELEKSGGAE…TGEAAGGAEE (65 aa)) are disordered. 2 stretches are compositionally biased toward low complexity: residues 456–471 (AAAARPVPGAPVPQGA) and 489–503 (GEAVGTGEAAGGAEE).

It belongs to the GOLGA6 family.

In Homo sapiens (Human), this protein is Golgin subfamily A member 6-like protein 10.